The sequence spans 500 residues: Probable malate:quinone oxidoreductase (500 aa).

The protein belongs to the MQO family. FAD is required as a cofactor.

The catalysed reaction is (S)-malate + a quinone = a quinol + oxaloacetate. It participates in carbohydrate metabolism; tricarboxylic acid cycle; oxaloacetate from (S)-malate (quinone route): step 1/1. The sequence is that of Probable malate:quinone oxidoreductase from Bacillus mycoides (strain KBAB4) (Bacillus weihenstephanensis).